Here is a 143-residue protein sequence, read N- to C-terminus: uncharacterized protein (143 aa).

This is an uncharacterized protein from Mycobacterium tuberculosis (strain CDC 1551 / Oshkosh).